Consider the following 363-residue polypeptide: Chalcone synthase B (363 aa).

Residue Cys170 is part of the active site.

It belongs to the thiolase-like superfamily. Chalcone/stilbene synthases family.

It catalyses the reaction (E)-4-coumaroyl-CoA + 3 malonyl-CoA + 3 H(+) = 2',4,4',6'-tetrahydroxychalcone + 3 CO2 + 4 CoA. The protein operates within secondary metabolite biosynthesis; flavonoid biosynthesis. In terms of biological role, the primary product of this enzyme is 4,2',4',6'-tetrahydroxychalcone (also termed naringenin-chalcone or chalcone) which can under specific conditions spontaneously isomerize into naringenin. This is Chalcone synthase B (CHSB) from Ipomoea nil (Japanese morning glory).